Consider the following 520-residue polypeptide: GMP synthase [glutamine-hydrolyzing] (520 aa).

The Glutamine amidotransferase type-1 domain occupies 9-202 (TILIIDFGSQ…VHRIVGVKPG (194 aa)). Catalysis depends on Cys-86, which acts as the Nucleophile. Catalysis depends on residues His-176 and Glu-178. Positions 203–395 (WTMGAYREQA…LGLPDSFIGR (193 aa)) constitute a GMPS ATP-PPase domain. 230 to 236 (SGGVDSS) contributes to the ATP binding site.

As to quaternary structure, homodimer.

It carries out the reaction XMP + L-glutamine + ATP + H2O = GMP + L-glutamate + AMP + diphosphate + 2 H(+). It participates in purine metabolism; GMP biosynthesis; GMP from XMP (L-Gln route): step 1/1. Functionally, catalyzes the synthesis of GMP from XMP. This chain is GMP synthase [glutamine-hydrolyzing], found in Brucella canis (strain ATCC 23365 / NCTC 10854 / RM-666).